A 215-amino-acid polypeptide reads, in one-letter code: Protein GrpE (215 aa).

Residues 1-28 (MKHTSDTPSNSDMPSDSQATQPNASATG) show a composition bias toward polar residues. The interval 1–52 (MKHTSDTPSNSDMPSDSQATQPNASATGQAAHAYSSQAQRASADAQAVAGDE) is disordered. Residues 29–52 (QAAHAYSSQAQRASADAQAVAGDE) show a composition bias toward low complexity.

This sequence belongs to the GrpE family. As to quaternary structure, homodimer.

It is found in the cytoplasm. Participates actively in the response to hyperosmotic and heat shock by preventing the aggregation of stress-denatured proteins, in association with DnaK and GrpE. It is the nucleotide exchange factor for DnaK and may function as a thermosensor. Unfolded proteins bind initially to DnaJ; upon interaction with the DnaJ-bound protein, DnaK hydrolyzes its bound ATP, resulting in the formation of a stable complex. GrpE releases ADP from DnaK; ATP binding to DnaK triggers the release of the substrate protein, thus completing the reaction cycle. Several rounds of ATP-dependent interactions between DnaJ, DnaK and GrpE are required for fully efficient folding. This Ralstonia pickettii (strain 12J) protein is Protein GrpE.